Reading from the N-terminus, the 1091-residue chain is Voltage-dependent calcium channel subunit alpha-2/delta-3 (1091 aa).

Residues Met1–Ser33 form the signal peptide. The Extracellular segment spans residues Glu34 to Gly1068. N-linked (GlcNAc...) asparagine glycosylation is present at Asn166. The 183-residue stretch at Asp256–Leu438 folds into the VWFA domain. Asp262, Ser264, and Ser266 together coordinate a divalent metal cation. The MIDAS-like motif signature appears at Asp262–Ser266. A glycan (N-linked (GlcNAc...) asparagine) is linked at Asn309. Cys412 and Cys1055 are disulfide-bonded. Residues Trp452–Arg549 enclose the Cache domain. N-linked (GlcNAc...) asparagine glycosylation is found at Asn553 and Asn632. The residue at position 924 (Tyr924) is a Phosphotyrosine. A helical transmembrane segment spans residues Gly1069 to Phe1089. Over Ser1090–Arg1091 the chain is Cytoplasmic.

The protein belongs to the calcium channel subunit alpha-2/delta family. Dimer formed of alpha-2-2 and delta-2 chains; disulfide-linked. Voltage-dependent calcium channels are multisubunit complexes, consisting of alpha-1 (CACNA1), alpha-2 (CACNA2D), beta (CACNB) and delta (CACNA2D) subunits in a 1:1:1:1 ratio. N-glycosylated. In terms of processing, may be proteolytically processed into subunits alpha-2-3 and delta-3 that are disulfide-linked. It is however unclear whether such cleavage really takes place in vivo and has a functional role. In terms of tissue distribution, brain-specific. Predominantly expressed in the caudate putamen, entorhinal complex, hippocampus and cortex.

The protein resides in the membrane. Functionally, the alpha-2/delta subunit of voltage-dependent calcium channels regulates calcium current density and activation/inactivation kinetics of the calcium channel. Acts as a regulatory subunit for P/Q-type calcium channel (CACNA1A), N-type (CACNA1B), L-type (CACNA1C OR CACNA1D) but not T-type (CACNA1G). This chain is Voltage-dependent calcium channel subunit alpha-2/delta-3 (Cacna2d3), found in Mus musculus (Mouse).